The chain runs to 699 residues: Polyribonucleotide nucleotidyltransferase (699 aa).

Mg(2+) contacts are provided by Asp-485 and Asp-491. In terms of domain architecture, KH spans 552-611; sequence PRITTIKINPEKIRDVIGKGGAVIRALTEETGTTIELEDDGTVKIASSNGEATKEAIRRI. The S1 motif domain maps to 621-689; the sequence is GRIYNGKVIR…RQGRVRLSIK (69 aa).

It belongs to the polyribonucleotide nucleotidyltransferase family. In terms of assembly, component of the RNA degradosome, which is a multiprotein complex involved in RNA processing and mRNA degradation. Requires Mg(2+) as cofactor.

The protein resides in the cytoplasm. The catalysed reaction is RNA(n+1) + phosphate = RNA(n) + a ribonucleoside 5'-diphosphate. Functionally, involved in mRNA degradation. Catalyzes the phosphorolysis of single-stranded polyribonucleotides processively in the 3'- to 5'-direction. This chain is Polyribonucleotide nucleotidyltransferase, found in Shewanella sp. (strain MR-7).